Consider the following 367-residue polypeptide: Methylthioribose-1-phosphate isomerase (367 aa).

The active-site Proton donor is the Asp-250.

This sequence belongs to the eIF-2B alpha/beta/delta subunits family. MtnA subfamily.

It is found in the cytoplasm. The protein resides in the nucleus. The enzyme catalyses 5-(methylsulfanyl)-alpha-D-ribose 1-phosphate = 5-(methylsulfanyl)-D-ribulose 1-phosphate. It functions in the pathway amino-acid biosynthesis; L-methionine biosynthesis via salvage pathway; L-methionine from S-methyl-5-thio-alpha-D-ribose 1-phosphate: step 1/6. Catalyzes the interconversion of methylthioribose-1-phosphate (MTR-1-P) into methylthioribulose-1-phosphate (MTRu-1-P). This chain is Methylthioribose-1-phosphate isomerase (IDI2), found in Hordeum vulgare (Barley).